A 1193-amino-acid chain; its full sequence is Structural maintenance of chromosomes protein 3 homolog (1193 aa).

Residue 31–38 (GFNGSGKS) participates in ATP binding. Lysine 101 carries the post-translational modification N6-acetyllysine. Coiled-coil stretches lie at residues 179 to 286 (SKKV…LNKT) and 332 to 483 (ILRV…EIIK). The SMC hinge domain maps to 505 to 631 (ENILGFLIDN…VKSLESCENY (127 aa)). Residues 665–993 (TVYNKLKELK…SHKNIKDMIQ (329 aa)) are a coiled coil.

This sequence belongs to the SMC family. SMC3 subfamily. Component of the cohesin complex. Acetylation at Lys-101 by ESCO1 is important for genome stability and S phase sister chromatid cohesion.

The protein localises to the nucleus. Central component of cohesin, a complex required for chromosome cohesion during the cell cycle. The cohesin complex may form a large proteinaceous ring within which sister chromatids can be trapped. At anaphase, the complex is cleaved and dissociates from chromatin, allowing sister chromatids to segregate. Cohesion is coupled to DNA replication and is involved in DNA repair. The cohesin complex also plays an important role in spindle pole assembly during mitosis and in chromosomes movement. This Plasmodium falciparum (isolate 3D7) protein is Structural maintenance of chromosomes protein 3 homolog.